The primary structure comprises 262 residues: MPKLQEMMTIVSQREVASNIFEMVLKGELVEEMDLPGQFLHLAVPNASMLLRRPISISSWDKVAKTCTILYRIGDETSGTYEISKLQSGAKIDVMGPLGNGFPVDEVVSTDKILIVGGGIGVPPLYELAKQLEEKNCQMTILLGFASEKVKILEKEFAELKNVSLKIATDDGSYGTKGHVGMLMEEIDFEVDALYTCGAPAMLKAVAKKYEQLERLYISMESRMACGIGACYACVEHDKEDENHALKVCEDGPVFLGKQLLL.

The FAD-binding FR-type domain occupies 3–104 (KLQEMMTIVS…MGPLGNGFPV (102 aa)). FAD contacts are provided by residues 53-56 (RPIS), 70-72 (LYR), and 79-80 (GT). Residues C226, C231, C234, and C249 each contribute to the [2Fe-2S] cluster site.

This sequence belongs to the PyrK family. Heterotetramer of 2 PyrK and 2 PyrD type B subunits. Requires [2Fe-2S] cluster as cofactor. It depends on FAD as a cofactor.

It functions in the pathway pyrimidine metabolism; UMP biosynthesis via de novo pathway; orotate from (S)-dihydroorotate (NAD(+) route): step 1/1. Functionally, responsible for channeling the electrons from the oxidation of dihydroorotate from the FMN redox center in the PyrD type B subunit to the ultimate electron acceptor NAD(+). The polypeptide is Dihydroorotate dehydrogenase B (NAD(+)), electron transfer subunit (Lactococcus lactis subsp. lactis (strain IL1403) (Streptococcus lactis)).